A 434-amino-acid polypeptide reads, in one-letter code: Septin-7 (434 aa).

Position 27 is a phosphotyrosine (tyrosine 27). Positions 44 to 313 (RGFEFTLMVV…ENYRSRKLAA (270 aa)) constitute a Septin-type G domain. The tract at residues 44–314 (RGFEFTLMVV…NYRSRKLAAV (271 aa)) is interaction with SEPTIN12. The G1 motif stretch occupies residues 54-61 (GESGLGKS). 54–61 (GESGLGKS) is a binding site for GTP. A Phosphoserine modification is found at serine 74. Residues threonine 87, glycine 113, and 192–200 (KADTLTPEE) contribute to the GTP site. The interval 110–113 (DTPG) is G3 motif. The tract at residues 191–194 (AKAD) is G4 motif. Phosphothreonine is present on threonine 225. Residues glycine 247 and arginine 262 each coordinate GTP. Positions 329–434 (TKSPLAQMEE…EKNKKKGKIF (106 aa)) form a coiled coil. The residue at position 331 (serine 331) is a Phosphoserine. At lysine 370 the chain carries N6-acetyllysine. Over residues 377-407 (QRRHEQMKKNLEAQHKGLEEKRRQFEDEKAN) the composition is skewed to basic and acidic residues. Positions 377 to 434 (QRRHEQMKKNLEAQHKGLEEKRRQFEDEKANWEAQQRILEQQNSSRTLEKNKKKGKIF) are disordered. Phosphoserine is present on serine 421. Position 423 is a phosphothreonine (threonine 423).

Belongs to the TRAFAC class TrmE-Era-EngA-EngB-Septin-like GTPase superfamily. Septin GTPase family. As to quaternary structure, septins polymerize into heterooligomeric protein complexes that form filaments, and associate with cellular membranes, actin filaments and microtubules. GTPase activity is required for filament formation. Filaments are assembled from asymmetrical heterotrimers, composed of SEPTIN2, SEPTIN6 and SEPTIN7 that associate head-to-head to form a hexameric unit. Within the trimer, directly interacts with SEPTIN6, while interaction with SEPTIN2 seems indirect. In the absence of SEPTIN6, forms homodimers. Interacts directly with CENPE and links CENPE to septin filaments composed of SEPTIN2, SEPTIN6 and SEPTIN7. Interacts with SEPTIN5, SEPTIN8, SEPTIN9 and SEPTIN11. Component of a septin core octameric complex consisting of SEPTIN12, SEPTIN7, SEPTIN6 and SEPTIN2 or SEPTIN4 in the order 12-7-6-2-2-6-7-12 or 12-7-6-4-4-6-7-12 and located in the sperm annulus; the SEPTIN12:SEPTIN7 association is mediated by the respective GTP-binding domains.

It localises to the cytoplasm. It is found in the chromosome. Its subcellular location is the centromere. The protein resides in the kinetochore. The protein localises to the cytoskeleton. It localises to the spindle. It is found in the cleavage furrow. Its subcellular location is the midbody. The protein resides in the cilium axoneme. The protein localises to the cell projection. It localises to the cilium. It is found in the flagellum. In terms of biological role, filament-forming cytoskeletal GTPase. Required for normal organization of the actin cytoskeleton. Required for normal progress through mitosis. Involved in cytokinesis. Required for normal association of CENPE with the kinetochore. Plays a role in ciliogenesis and collective cell movements. Forms a filamentous structure with SEPTIN12, SEPTIN6, SEPTIN2 and probably SEPTIN4 at the sperm annulus which is required for the structural integrity and motility of the sperm tail during postmeiotic differentiation. The polypeptide is Septin-7 (Pan troglodytes (Chimpanzee)).